We begin with the raw amino-acid sequence, 870 residues long: Suppressor of yeast profilin deletion (870 aa).

The segment covering 252–267 has biased composition (polar residues); sequence SSSSKEVVPNNASPAS. 2 disordered regions span residues 252-298 and 310-574; these read SSSS…RKSA and SSSL…TLSS. Lysine 256 is covalently cross-linked (Glycyl lysine isopeptide (Lys-Gly) (interchain with G-Cter in ubiquitin)). Serine 264 bears the Phosphoserine mark. Residues 283–292 are compositionally biased toward basic and acidic residues; sequence TEREKKSPQK. Over residues 310-323 the composition is skewed to polar residues; the sequence is SSSLTHNDLMNNEF. Serine 331 is subject to Phosphoserine. The segment covering 333-342 has biased composition (basic residues); sequence KSKKSSHTLR. Positions 367–378 are enriched in polar residues; that stretch reads HIQASITETPNN. Residues 379–390 are compositionally biased toward low complexity; that stretch reads SSTRVSSTATSS. A compositionally biased stretch (polar residues) spans 398 to 409; sequence PTYSSSKSNNWT. Threonine 416 bears the Phosphothreonine mark. The span at 473–485 shows a compositional bias: low complexity; the sequence is PISISQPPLQPQS. Phosphoserine occurs at positions 496 and 500. The segment covering 497-514 has biased composition (polar residues); the sequence is PSISLPTATVDNQPSGQV. Threonine 577 is modified (phosphothreonine). Residues 609–869 form the MHD domain; it reads QFGLNASIAE…TLTTGNYHGL (261 aa).

Belongs to the SYP1 family. Interacts with CDC3, CDC10, CDC11, CDC12, EDE1 and EPS15.

It localises to the bud neck. Functionally, multi-functional protein that contributes to the endocytic process, but also to events that occur at the neck during budding and/or cytokinesis. Plays a role as an endocytic adapters with membrane-tubulation activity that associates with transmembrane cargo proteins and initiates the formation of endocytic sites. Contributes to the stabilization of the nascent clathrin-coated pit. Also plays a role in late endocytosis by mediating vesiculation. Involved in the regulation of cell cycle-dependent dynamics of the septin cytoskeleton by promoting septin turnover in different cell cycle stages. May act through the RHO2 signaling pathway to repolarize cortical actin patches in profilin-deficient cells. This chain is Suppressor of yeast profilin deletion (SYP1), found in Saccharomyces cerevisiae (strain ATCC 204508 / S288c) (Baker's yeast).